The sequence spans 89 residues: Small ribosomal subunit protein uS14A (89 aa).

This sequence belongs to the universal ribosomal protein uS14 family. As to quaternary structure, part of the 30S ribosomal subunit. Contacts proteins S3 and S10.

Its function is as follows. Binds 16S rRNA, required for the assembly of 30S particles and may also be responsible for determining the conformation of the 16S rRNA at the A site. This is Small ribosomal subunit protein uS14A from Streptococcus agalactiae serotype Ia (strain ATCC 27591 / A909 / CDC SS700).